The following is a 173-amino-acid chain: Protein GrpE (173 aa).

A compositionally biased stretch (basic and acidic residues) spans 1 to 20 (MQDEFKTDTPRTEAGSEKET). The tract at residues 1–23 (MQDEFKTDTPRTEAGSEKETMPS) is disordered.

This sequence belongs to the GrpE family. Homodimer.

The protein localises to the cytoplasm. Functionally, participates actively in the response to hyperosmotic and heat shock by preventing the aggregation of stress-denatured proteins, in association with DnaK and GrpE. It is the nucleotide exchange factor for DnaK and may function as a thermosensor. Unfolded proteins bind initially to DnaJ; upon interaction with the DnaJ-bound protein, DnaK hydrolyzes its bound ATP, resulting in the formation of a stable complex. GrpE releases ADP from DnaK; ATP binding to DnaK triggers the release of the substrate protein, thus completing the reaction cycle. Several rounds of ATP-dependent interactions between DnaJ, DnaK and GrpE are required for fully efficient folding. This is Protein GrpE from Thiobacillus denitrificans (strain ATCC 25259 / T1).